Consider the following 274-residue polypeptide: SPbeta prophage-derived UPF0714 protein YoqZ (274 aa).

Belongs to the UPF0714 family.

This chain is SPbeta prophage-derived UPF0714 protein YoqZ (yoqZ), found in Bacillus subtilis (strain 168).